The following is a 192-amino-acid chain: Pyruvate kinase (192 aa).

A substrate-binding site is contributed by Arg-41. The K(+) site is built by Asn-43, Ser-45, Asp-75, and Thr-76. Residue 43-46 participates in ATP binding; that stretch reads NFSH.

Belongs to the pyruvate kinase family. The cofactor is Mg(2+). It depends on K(+) as a cofactor.

It carries out the reaction pyruvate + ATP = phosphoenolpyruvate + ADP + H(+). Its pathway is carbohydrate degradation; glycolysis; pyruvate from D-glyceraldehyde 3-phosphate: step 5/5. The polypeptide is Pyruvate kinase (pyk) (Spiroplasma citri).